A 94-amino-acid chain; its full sequence is Co-chaperonin GroES (94 aa).

It belongs to the GroES chaperonin family. As to quaternary structure, heptamer of 7 subunits arranged in a ring. Interacts with the chaperonin GroEL.

Its subcellular location is the cytoplasm. Functionally, together with the chaperonin GroEL, plays an essential role in assisting protein folding. The GroEL-GroES system forms a nano-cage that allows encapsulation of the non-native substrate proteins and provides a physical environment optimized to promote and accelerate protein folding. GroES binds to the apical surface of the GroEL ring, thereby capping the opening of the GroEL channel. The protein is Co-chaperonin GroES of Streptococcus pneumoniae serotype 19F (strain G54).